The primary structure comprises 1289 residues: Long-tail fiber proximal subunit (1289 aa).

It belongs to the tevenvirinae long-tail fiber proximal subunit protein family. The long-tail fibers are trimeric, with a stoichiometry of gp34/gp37/gp36/gp35 of 3:3:3:1.

The protein localises to the virion. Its function is as follows. Structural component of the proximal-half of the long-tail fiber. The long-tail fibers of T4 are about 1600 Angstroms long with a kink in the middle that divides the fiber into proximal and distal halves. The polypeptide is Long-tail fiber proximal subunit (34) (Escherichia coli (Bacteriophage T4)).